A 101-amino-acid chain; its full sequence is Venom protein 214 (101 aa).

Residues 1-16 (MIRYVLVIITCFLVAA) form the signal peptide.

Contains 3 disulfide bonds. Expressed by the venom gland.

The protein localises to the secreted. The polypeptide is Venom protein 214 (Lychas mucronatus (Chinese swimming scorpion)).